A 216-amino-acid chain; its full sequence is ATP phosphoribosyltransferase (216 aa).

This sequence belongs to the ATP phosphoribosyltransferase family. Short subfamily. As to quaternary structure, heteromultimer composed of HisG and HisZ subunits.

It localises to the cytoplasm. It carries out the reaction 1-(5-phospho-beta-D-ribosyl)-ATP + diphosphate = 5-phospho-alpha-D-ribose 1-diphosphate + ATP. It participates in amino-acid biosynthesis; L-histidine biosynthesis; L-histidine from 5-phospho-alpha-D-ribose 1-diphosphate: step 1/9. Catalyzes the condensation of ATP and 5-phosphoribose 1-diphosphate to form N'-(5'-phosphoribosyl)-ATP (PR-ATP). Has a crucial role in the pathway because the rate of histidine biosynthesis seems to be controlled primarily by regulation of HisG enzymatic activity. This Nitrosomonas europaea (strain ATCC 19718 / CIP 103999 / KCTC 2705 / NBRC 14298) protein is ATP phosphoribosyltransferase.